Here is a 264-residue protein sequence, read N- to C-terminus: Granzyme K (264 aa).

Residues 1–24 (MTKFSSFSLFFLIVGAYMTHVCFN) form the signal peptide. A propeptide spans 25 to 26 (ME) (activation peptide). Positions 27 to 259 (IIGGKEVSPH…YQTWIKSNLV (233 aa)) constitute a Peptidase S1 domain. An intrachain disulfide couples C52 to C68. Catalysis depends on charge relay system residues H67 and D116. 3 cysteine pairs are disulfide-bonded: C149–C220, C181–C199, and C210–C234. S214 serves as the catalytic Charge relay system.

This sequence belongs to the peptidase S1 family. Granzyme subfamily. As to expression, expressed in lung, spleen, thymus and peripheral blood leukocytes.

Its subcellular location is the secreted. It is found in the cytoplasmic granule. The chain is Granzyme K (GZMK) from Homo sapiens (Human).